The primary structure comprises 362 residues: 3-dehydroquinate synthase (362 aa).

NAD(+)-binding positions include 70–75 (DGEQYK), 104–108 (GVIGD), 128–129 (TT), Lys141, and Lys150. Residues Glu183, His246, and His263 each coordinate Zn(2+).

This sequence belongs to the sugar phosphate cyclases superfamily. Dehydroquinate synthase family. The cofactor is NAD(+). Requires Co(2+) as cofactor. Zn(2+) serves as cofactor.

It localises to the cytoplasm. It catalyses the reaction 7-phospho-2-dehydro-3-deoxy-D-arabino-heptonate = 3-dehydroquinate + phosphate. It functions in the pathway metabolic intermediate biosynthesis; chorismate biosynthesis; chorismate from D-erythrose 4-phosphate and phosphoenolpyruvate: step 2/7. Catalyzes the conversion of 3-deoxy-D-arabino-heptulosonate 7-phosphate (DAHP) to dehydroquinate (DHQ). The sequence is that of 3-dehydroquinate synthase from Pasteurella multocida (strain Pm70).